Reading from the N-terminus, the 386-residue chain is 8-amino-7-oxononanoate synthase (386 aa).

Arg-26 is a binding site for substrate. Pyridoxal 5'-phosphate is bound at residue 104–105 (GY). Residue His-129 coordinates substrate. 3 residues coordinate pyridoxal 5'-phosphate: Ser-176, His-204, and Thr-232. An N6-(pyridoxal phosphate)lysine modification is found at Lys-235. Thr-349 is a substrate binding site.

Belongs to the class-II pyridoxal-phosphate-dependent aminotransferase family. BioF subfamily. In terms of assembly, homodimer. Requires pyridoxal 5'-phosphate as cofactor.

The catalysed reaction is 6-carboxyhexanoyl-[ACP] + L-alanine + H(+) = (8S)-8-amino-7-oxononanoate + holo-[ACP] + CO2. It functions in the pathway cofactor biosynthesis; biotin biosynthesis. Catalyzes the decarboxylative condensation of pimeloyl-[acyl-carrier protein] and L-alanine to produce 8-amino-7-oxononanoate (AON), [acyl-carrier protein], and carbon dioxide. This is 8-amino-7-oxononanoate synthase from Chromohalobacter salexigens (strain ATCC BAA-138 / DSM 3043 / CIP 106854 / NCIMB 13768 / 1H11).